The primary structure comprises 470 residues: 6-phospho-beta-galactosidase (470 aa).

D-galactose 6-phosphate-binding residues include glutamine 19, histidine 116, asparagine 159, glutamate 160, and asparagine 297. Residue glutamate 160 is the Proton donor of the active site. The active-site Nucleophile is the glutamate 375. D-galactose 6-phosphate-binding residues include serine 430, tryptophan 431, lysine 437, and tyrosine 439.

Belongs to the glycosyl hydrolase 1 family.

It catalyses the reaction a 6-phospho-beta-D-galactoside + H2O = D-galactose 6-phosphate + an alcohol. The protein operates within carbohydrate metabolism; lactose degradation; D-galactose 6-phosphate and beta-D-glucose from lactose 6-phosphate: step 1/1. The protein is 6-phospho-beta-galactosidase of Staphylococcus aureus (strain Mu3 / ATCC 700698).